A 308-amino-acid chain; its full sequence is Isoaspartyl peptidase/L-asparaginase (308 aa).

N-acetylmethionine is present on methionine 1. The active-site Nucleophile is threonine 168. Substrate is bound by residues 196-199 (RVGD) and 219-222 (TGHG).

It belongs to the Ntn-hydrolase family. As to quaternary structure, heterodimer of an alpha and beta chain produced by autocleavage. This heterodimer may then dimerize in turn, giving rise to a heterotetramer. Cleaved into an alpha and beta chain by autocatalysis; this activates the enzyme. The N-terminal residue of the beta subunit is responsible for the nucleophile hydrolase activity.

It localises to the cytoplasm. It catalyses the reaction L-asparagine + H2O = L-aspartate + NH4(+). The enzyme catalyses Cleavage of a beta-linked Asp residue from the N-terminus of a polypeptide.. In terms of biological role, has both L-asparaginase and beta-aspartyl peptidase activity. May be involved in the production of L-aspartate, which can act as an excitatory neurotransmitter in some brain regions. Is highly active with L-Asp beta-methyl ester. Besides, has catalytic activity toward beta-aspartyl dipeptides and their methyl esters, including beta-L-Asp-L-Phe, beta-L-Asp-L-Phe methyl ester (aspartame), beta-L-Asp-L-Ala, beta-L-Asp-L-Leu and beta-L-Asp-L-Lys. Does not have aspartylglucosaminidase activity and is inactive toward GlcNAc-L-Asn. Likewise, has no activity toward glutamine. The polypeptide is Isoaspartyl peptidase/L-asparaginase (ASRGL1) (Macaca fascicularis (Crab-eating macaque)).